A 111-amino-acid polypeptide reads, in one-letter code: UPF0060 membrane protein XAC3064 (111 aa).

4 helical membrane passes run 8–28 (LLLFAATALAELVGCYLPYLW), 32–52 (GGSVWLLLPTALSLAVFVWLL), 64–84 (AAYGGVYIASALLWLWWVDGV), and 91–111 (LLGAACCLLGMAVIMFSPRSA).

Belongs to the UPF0060 family.

It localises to the cell inner membrane. The polypeptide is UPF0060 membrane protein XAC3064 (Xanthomonas axonopodis pv. citri (strain 306)).